The chain runs to 119 residues: Large ribosomal subunit protein bL20 (119 aa).

It belongs to the bacterial ribosomal protein bL20 family.

In terms of biological role, binds directly to 23S ribosomal RNA and is necessary for the in vitro assembly process of the 50S ribosomal subunit. It is not involved in the protein synthesizing functions of that subunit. The protein is Large ribosomal subunit protein bL20 of Dichelobacter nodosus (strain VCS1703A).